Here is a 239-residue protein sequence, read N- to C-terminus: 4-hydroxy-tetrahydrodipicolinate reductase (239 aa).

NAD(+)-binding positions include 9–14 (GINGKI), 78–80 (GTT), and 104–107 (APNF). Residue H134 is the Proton donor/acceptor of the active site. H135 contributes to the (S)-2,3,4,5-tetrahydrodipicolinate binding site. The active-site Proton donor is the K138. 144–145 (GT) lines the (S)-2,3,4,5-tetrahydrodipicolinate pocket.

The protein belongs to the DapB family.

It localises to the cytoplasm. It carries out the reaction (S)-2,3,4,5-tetrahydrodipicolinate + NAD(+) + H2O = (2S,4S)-4-hydroxy-2,3,4,5-tetrahydrodipicolinate + NADH + H(+). The enzyme catalyses (S)-2,3,4,5-tetrahydrodipicolinate + NADP(+) + H2O = (2S,4S)-4-hydroxy-2,3,4,5-tetrahydrodipicolinate + NADPH + H(+). The protein operates within amino-acid biosynthesis; L-lysine biosynthesis via DAP pathway; (S)-tetrahydrodipicolinate from L-aspartate: step 4/4. Its function is as follows. Catalyzes the conversion of 4-hydroxy-tetrahydrodipicolinate (HTPA) to tetrahydrodipicolinate. The chain is 4-hydroxy-tetrahydrodipicolinate reductase from Coxiella burnetii (strain CbuG_Q212) (Coxiella burnetii (strain Q212)).